The sequence spans 58 residues: Keratin-associated protein 21-3 (58 aa).

As to quaternary structure, interacts with hair keratins.

In the hair cortex, hair keratin intermediate filaments are embedded in an interfilamentous matrix, consisting of hair keratin-associated proteins (KRTAP), which are essential for the formation of a rigid and resistant hair shaft through their extensive disulfide bond cross-linking with abundant cysteine residues of hair keratins. The matrix proteins include the high-sulfur and high-glycine-tyrosine keratins. The polypeptide is Keratin-associated protein 21-3 (KRTAP21-3) (Homo sapiens (Human)).